We begin with the raw amino-acid sequence, 307 residues long: Ribonuclease Z (307 aa).

7 residues coordinate Zn(2+): H64, H66, D68, H69, H141, D209, and H267. The active-site Proton acceptor is D68.

Belongs to the RNase Z family. Homodimer. The cofactor is Zn(2+).

The catalysed reaction is Endonucleolytic cleavage of RNA, removing extra 3' nucleotides from tRNA precursor, generating 3' termini of tRNAs. A 3'-hydroxy group is left at the tRNA terminus and a 5'-phosphoryl group is left at the trailer molecule.. Zinc phosphodiesterase, which displays some tRNA 3'-processing endonuclease activity. Probably involved in tRNA maturation, by removing a 3'-trailer from precursor tRNA. The protein is Ribonuclease Z of Thermoplasma acidophilum (strain ATCC 25905 / DSM 1728 / JCM 9062 / NBRC 15155 / AMRC-C165).